A 208-amino-acid polypeptide reads, in one-letter code: Small ribosomal subunit protein uS3 (208 aa).

Residues 38-106 (IRDYIKARLY…EILIDIQEVR (69 aa)) enclose the KH type-2 domain.

It belongs to the universal ribosomal protein uS3 family. As to quaternary structure, part of the 30S ribosomal subunit. Forms a tight complex with proteins S10 and S14.

Its function is as follows. Binds the lower part of the 30S subunit head. Binds mRNA in the 70S ribosome, positioning it for translation. The polypeptide is Small ribosomal subunit protein uS3 (Syntrophobacter fumaroxidans (strain DSM 10017 / MPOB)).